A 172-amino-acid chain; its full sequence is Adenine phosphoribosyltransferase (172 aa).

It belongs to the purine/pyrimidine phosphoribosyltransferase family. Homodimer.

The protein resides in the cytoplasm. The catalysed reaction is AMP + diphosphate = 5-phospho-alpha-D-ribose 1-diphosphate + adenine. It participates in purine metabolism; AMP biosynthesis via salvage pathway; AMP from adenine: step 1/1. Its function is as follows. Catalyzes a salvage reaction resulting in the formation of AMP, that is energically less costly than de novo synthesis. The protein is Adenine phosphoribosyltransferase of Microcystis aeruginosa (strain NIES-843 / IAM M-2473).